The sequence spans 497 residues: Dihydrolipoyl dehydrogenase (497 aa).

FAD is bound by residues 60 to 69 (EKEPSLGGTC), Lys78, Gly142, and 170 to 172 (TGS). Cysteines 69 and 74 form a disulfide. Residues 207–214 (GAGVIGLE), Glu230, Val264, and Gly302 each bind NAD(+). Residues Asp343 and 349-352 (MLAH) each bind FAD. The Proton acceptor role is filled by His475.

It belongs to the class-I pyridine nucleotide-disulfide oxidoreductase family. Homodimer. FAD serves as cofactor.

The protein resides in the cytoplasm. The catalysed reaction is N(6)-[(R)-dihydrolipoyl]-L-lysyl-[protein] + NAD(+) = N(6)-[(R)-lipoyl]-L-lysyl-[protein] + NADH + H(+). This is Dihydrolipoyl dehydrogenase from Manduca sexta (Tobacco hawkmoth).